The chain runs to 449 residues: uncharacterized protein (449 aa).

The protein localises to the mitochondrion. This is an uncharacterized protein from Podospora anserina (strain S / ATCC MYA-4624 / DSM 980 / FGSC 10383) (Pleurage anserina).